Here is an 89-residue protein sequence, read N- to C-terminus: Signal recognition particle 19 kDa protein (89 aa).

This sequence belongs to the SRP19 family. In terms of assembly, part of the signal recognition particle protein translocation system, which is composed of SRP and FtsY. Archaeal SRP consists of a 7S RNA molecule of 300 nucleotides and two protein subunits: SRP54 and SRP19.

It is found in the cytoplasm. Functionally, involved in targeting and insertion of nascent membrane proteins into the cytoplasmic membrane. Binds directly to 7S RNA and mediates binding of the 54 kDa subunit of the SRP. In Methanobrevibacter smithii (strain ATCC 35061 / DSM 861 / OCM 144 / PS), this protein is Signal recognition particle 19 kDa protein.